The primary structure comprises 81 residues: Serine/arginine-rich splicing factor 6 (81 aa).

Over residues 1–48 (RSRSRSRRSSRSRSRSISKSRSRSRSRSKGRSRSRSKGRKSRSKSKSK) the composition is skewed to basic residues. A disordered region spans residues 1-81 (RSRSRSRRSS…SRSRSRSRSP (81 aa)). A compositionally biased stretch (basic and acidic residues) spans 62–71 (RSKDEYEKSR). Residues 72-81 (SRSRSRSRSP) show a composition bias toward basic residues.

This sequence belongs to the splicing factor SR family. As to quaternary structure, binds SREK1/SFRS12. Interacts with DYRK1A. In terms of processing, extensively phosphorylated on serine residues in the RS domain. Phosphorylated by DYRK1A, probably in the RS domain. Phosphorylation by DYRK1A modulates alternative splice site selection and inhibits the expression of MAPT/Tau exon 10.

It is found in the nucleus. Its subcellular location is the nucleus speckle. In terms of biological role, plays a role in constitutive splicing and modulates the selection of alternative splice sites. Plays a role in the alternative splicing of MAPT/Tau exon 10. Binds to alternative exons of TNC pre-mRNA and promotes the expression of alternatively spliced TNC. Plays a role in wound healing and in the regulation of keratinocyte differentiation and proliferation via its role in alternative splicing. This is Serine/arginine-rich splicing factor 6 (SRSF6) from Oryctolagus cuniculus (Rabbit).